We begin with the raw amino-acid sequence, 1441 residues long: uncharacterized protein (1441 aa).

13 disordered regions span residues 1–95 (MGFL…EVIS), 150–204 (NGGI…QQQF), 224–289 (KPHQ…GEGE), 401–477 (HSNG…QLHQ), 529–661 (RHES…QPQQ), 680–760 (LNKD…KSQT), 776–810 (RKSS…HIQQ), 849–899 (QQQF…TQQL), 980–1118 (RGGS…DNNN), 1161–1185 (KSLK…NENN), 1209–1321 (NIES…YRSY), 1348–1402 (GHNS…HIFF), and 1421–1441 (LKFN…SILE). Residues 19 to 38 (NDNSFDGGSSSYNNNNNNNN) are compositionally biased toward low complexity. Positions 39–56 (QPITYTPTAIRSPNNKTM) are enriched in polar residues. Composition is skewed to low complexity over residues 57–91 (SQSQ…GNGN), 153–187 (ISQP…TTTP), 227–283 (QQQQ…SLQN), 416–445 (NNNN…GINN), 555–564 (GNTDGVNIDN), and 572–635 (NNNN…TNNT). The segment covering 636–645 (ATPSVINGDS) has biased composition (polar residues). Low complexity-rich tracts occupy residues 648–661 (QEQP…QPQQ) and 680–700 (LNKD…DDNN). A compositionally biased stretch (basic and acidic residues) spans 703–720 (SREEMENILKKSQQDSNK). Residues 729–751 (EDSNSGSPTFQDFQSSAAASNVS) are compositionally biased toward polar residues. 2 stretches are compositionally biased toward low complexity: residues 780–810 (DSLN…HIQQ) and 849–880 (QQQF…NSGS). Residues 881–892 (INGGSNSGGGGV) show a composition bias toward gly residues. Positions 981-994 (GGSTNRTTPPFLTP) are enriched in polar residues. Residues 995–1067 (NTSQTNLSSL…NKQTANNTTN (73 aa)) are compositionally biased toward low complexity. A compositionally biased stretch (polar residues) spans 1068–1087 (DFSFDQNTDLRSSTNSLTIG). Positions 1088-1118 (SNSNFSSLKNSLNLENPENNNNPDKNVDNNN) are enriched in low complexity. Composition is skewed to low complexity over residues 1225 to 1249 (DNNN…SLRN) and 1257 to 1291 (NISN…NNNE). Positions 1362–1373 (RHKDSIGDKEMD) are enriched in basic and acidic residues.

This is an uncharacterized protein from Dictyostelium discoideum (Social amoeba).